Consider the following 912-residue polypeptide: Lateral signaling target protein 2 homolog (912 aa).

The segment covering 323–332 (NVNTSNNSDN) has biased composition (low complexity). 4 disordered regions span residues 323-360 (NVNT…SSFY), 455-610 (ADSG…ESSQ), 664-745 (NSSP…ASSA), and 769-846 (GGGS…APPR). The span at 333-355 (SDSRVDDSPNDELRHESETRDNR) shows a compositional bias: basic and acidic residues. The span at 455–468 (ADSGLGTANPSVDN) shows a compositional bias: polar residues. Over residues 486-505 (SSEEGEIDEYDNEEDDEDSD) the composition is skewed to acidic residues. The segment covering 530–544 (YRTHKQQHHHRHRRS) has biased composition (basic residues). Composition is skewed to polar residues over residues 545–556 (SGSIMSATSSRK) and 572–590 (VPSN…DTSP). Positions 591 to 610 (SSGNQSECSSTSSTTGESSQ) are enriched in low complexity. Residues 682–699 (DKPKEPDPTDLFEFRASE) show a composition bias toward basic and acidic residues. Composition is skewed to polar residues over residues 705-717 (PGQN…QSIY), 735-745 (PGTSPIRASSA), 780-801 (ERSV…ATDS), and 822-834 (SRSS…NGTS). The FYVE-type zinc finger occupies 850 to 910 (DGDAPRCMAC…VCRDCYVREV (61 aa)). Residues cysteine 856, cysteine 859, cysteine 872, cysteine 875, cysteine 880, cysteine 883, cysteine 902, and cysteine 905 each contribute to the Zn(2+) site.

This sequence belongs to the lst-2 family.

Its function is as follows. Negative regulator of epidermal growth factor receptor (EGFR) signaling. In Aedes aegypti (Yellowfever mosquito), this protein is Lateral signaling target protein 2 homolog.